The following is a 419-amino-acid chain: eIF5-mimic protein 2 (419 aa).

Met1 is modified (N-acetylmethionine). The span at Met1–Arg15 shows a compositional bias: polar residues. The disordered stretch occupies residues Met1 to Arg26. Residue Ser12 is modified to Phosphoserine. The region spanning Asn247–Glu414 is the W2 domain. Residue Lys368 forms a Glycyl lysine isopeptide (Lys-Gly) (interchain with G-Cter in SUMO2) linkage. Phosphoserine occurs at positions 411 and 413.

It belongs to the BZW family.

Its function is as follows. Translation initiation regulator which represses repeat-associated non-AUG (RAN) initiated translation probably by acting as a competitive inhibitor of eukaryotic translation initiation factor 5 (EIF5) function. Enhances histone H4 gene transcription but does not seem to bind DNA directly. In Homo sapiens (Human), this protein is eIF5-mimic protein 2 (BZW1).